Reading from the N-terminus, the 352-residue chain is B1 bradykinin receptor (352 aa).

At 1 to 41 (MASWPPLELQSSNQSQLFPQNATACDNAPEAWDLLHRVLPT) the chain is on the extracellular side. N-linked (GlcNAc...) asparagine glycans are attached at residues Asn13 and Asn21. The chain crosses the membrane as a helical span at residues 42–62 (FIISICSFGLLGNLFVLLVFL). Topologically, residues 63 to 72 (LPRRRLNVAE) are cytoplasmic. A helical transmembrane segment spans residues 73–93 (IYLANLAASDLVFVLGLPFWA). Residues 94–110 (ENIWNQFNWPFGALLCR) are Extracellular-facing. Cys109 and Cys188 are joined by a disulfide. A helical transmembrane segment spans residues 111–131 (GINGVIKANLFISIFLVVAIS). Over 132–153 (QDRYCLLVHPMASRRRQRRRQA) the chain is Cytoplasmic. The helical transmembrane segment at 154–174 (RVTCVLIWVVGGLLSIPTFLL) threads the bilayer. Topologically, residues 175–206 (RSIQAVPDLNITACILLLPHEAWHFARIVELN) are extracellular. The N-linked (GlcNAc...) asparagine glycan is linked to Asn184. Residues 207–227 (ILAFLLPLAAIVFFNYHILAS) traverse the membrane as a helical segment. Topologically, residues 228–250 (LRGREEVSRTRCGGRKDSKTTAL) are cytoplasmic. The helical transmembrane segment at 251–271 (ILTLVVAFLVCWAPYHFFAFL) threads the bilayer. Topologically, residues 272–294 (EFLFQVQAIRSCFWEDFIDLGLQ) are extracellular. A helical membrane pass occupies residues 295-315 (LANFLAFTNSSLNPVIYVFVG). The Cytoplasmic segment spans residues 316 to 352 (RLFRTKVWELYKQCTPKSLAPISSSHRKEIFQLFWRN). The S-palmitoyl cysteine moiety is linked to residue Cys329.

It belongs to the G-protein coupled receptor 1 family. Bradykinin receptor subfamily. BDKRB1 sub-subfamily.

The protein resides in the cell membrane. This is a receptor for bradykinin. Could be a factor in chronic pain and inflammation. The sequence is that of B1 bradykinin receptor (BDKRB1) from Chlorocebus pygerythrus (Vervet monkey).